The sequence spans 546 residues: Chaperonin GroEL (546 aa).

ATP is bound by residues 30 to 33 (TLGP), Lys51, 87 to 91 (DGTTT), Gly415, and Asp495.

It belongs to the chaperonin (HSP60) family. In terms of assembly, forms a cylinder of 14 subunits composed of two heptameric rings stacked back-to-back. Interacts with the co-chaperonin GroES.

It is found in the cytoplasm. The catalysed reaction is ATP + H2O + a folded polypeptide = ADP + phosphate + an unfolded polypeptide.. Its function is as follows. Together with its co-chaperonin GroES, plays an essential role in assisting protein folding. The GroEL-GroES system forms a nano-cage that allows encapsulation of the non-native substrate proteins and provides a physical environment optimized to promote and accelerate protein folding. This Brucella suis (strain ATCC 23445 / NCTC 10510) protein is Chaperonin GroEL.